We begin with the raw amino-acid sequence, 337 residues long: Methionyl-tRNA formyltransferase (337 aa).

110 to 113 contacts (6S)-5,6,7,8-tetrahydrofolate; it reads SLLP.

Belongs to the Fmt family.

It carries out the reaction L-methionyl-tRNA(fMet) + (6R)-10-formyltetrahydrofolate = N-formyl-L-methionyl-tRNA(fMet) + (6S)-5,6,7,8-tetrahydrofolate + H(+). Its function is as follows. Attaches a formyl group to the free amino group of methionyl-tRNA(fMet). The formyl group appears to play a dual role in the initiator identity of N-formylmethionyl-tRNA by promoting its recognition by IF2 and preventing the misappropriation of this tRNA by the elongation apparatus. This Frankia casuarinae (strain DSM 45818 / CECT 9043 / HFP020203 / CcI3) protein is Methionyl-tRNA formyltransferase.